The primary structure comprises 417 residues: NADH-quinone oxidoreductase subunit D (417 aa).

This sequence belongs to the complex I 49 kDa subunit family. NDH-1 is composed of 14 different subunits. Subunits NuoB, C, D, E, F, and G constitute the peripheral sector of the complex.

It is found in the cell inner membrane. The enzyme catalyses a quinone + NADH + 5 H(+)(in) = a quinol + NAD(+) + 4 H(+)(out). NDH-1 shuttles electrons from NADH, via FMN and iron-sulfur (Fe-S) centers, to quinones in the respiratory chain. The immediate electron acceptor for the enzyme in this species is believed to be ubiquinone. Couples the redox reaction to proton translocation (for every two electrons transferred, four hydrogen ions are translocated across the cytoplasmic membrane), and thus conserves the redox energy in a proton gradient. This chain is NADH-quinone oxidoreductase subunit D, found in Polaromonas sp. (strain JS666 / ATCC BAA-500).